Here is a 213-residue protein sequence, read N- to C-terminus: MTDSTPFAPTAQRLGLYPVVDSVEWIERLLGVGVKTIQLRIKDRSDEQAETDVIQAIALGSRYQAQLFINDYWTLAVKHQAYGVHLGQEDLDTADLAAIKKAGLRLGVSTHYDRELARAVAINPSYIALGHIFPTQTKDMPSAPQGLAELTRHIADLQGRFPTVAIGGISIDRVPAVLATGVGSIAVVSAITQAPDWRQATATLLKMIEGREA.

4-amino-2-methyl-5-(diphosphooxymethyl)pyrimidine-binding positions include Gln-38 to Lys-42 and Asn-70. 2 residues coordinate Mg(2+): Asp-71 and Asp-90. Ser-109 is a 4-amino-2-methyl-5-(diphosphooxymethyl)pyrimidine binding site. Thr-135–Thr-137 lines the 2-[(2R,5Z)-2-carboxy-4-methylthiazol-5(2H)-ylidene]ethyl phosphate pocket. Lys-138 provides a ligand contact to 4-amino-2-methyl-5-(diphosphooxymethyl)pyrimidine. 2-[(2R,5Z)-2-carboxy-4-methylthiazol-5(2H)-ylidene]ethyl phosphate is bound by residues Gly-168 and Val-188–Ser-189.

The protein belongs to the thiamine-phosphate synthase family. Mg(2+) is required as a cofactor.

The enzyme catalyses 2-[(2R,5Z)-2-carboxy-4-methylthiazol-5(2H)-ylidene]ethyl phosphate + 4-amino-2-methyl-5-(diphosphooxymethyl)pyrimidine + 2 H(+) = thiamine phosphate + CO2 + diphosphate. It carries out the reaction 2-(2-carboxy-4-methylthiazol-5-yl)ethyl phosphate + 4-amino-2-methyl-5-(diphosphooxymethyl)pyrimidine + 2 H(+) = thiamine phosphate + CO2 + diphosphate. The catalysed reaction is 4-methyl-5-(2-phosphooxyethyl)-thiazole + 4-amino-2-methyl-5-(diphosphooxymethyl)pyrimidine + H(+) = thiamine phosphate + diphosphate. It participates in cofactor biosynthesis; thiamine diphosphate biosynthesis; thiamine phosphate from 4-amino-2-methyl-5-diphosphomethylpyrimidine and 4-methyl-5-(2-phosphoethyl)-thiazole: step 1/1. Condenses 4-methyl-5-(beta-hydroxyethyl)thiazole monophosphate (THZ-P) and 2-methyl-4-amino-5-hydroxymethyl pyrimidine pyrophosphate (HMP-PP) to form thiamine monophosphate (TMP). The protein is Thiamine-phosphate synthase of Pectobacterium atrosepticum (strain SCRI 1043 / ATCC BAA-672) (Erwinia carotovora subsp. atroseptica).